Here is a 484-residue protein sequence, read N- to C-terminus: Poly(A) RNA polymerase GLD2 (484 aa).

Phosphoserine occurs at positions 62 and 69. Positions 76-92 match the Nuclear localization signal motif; the sequence is KRISDEKAFPLDGKRQR. The residue at position 95 (Ser-95) is a Phosphoserine. Mg(2+) contacts are provided by Asp-213 and Asp-215. The PAP-associated domain occupies 386–440; the sequence is SLGDLLLGFLKYYATEFDWNTQMISVREAKAIPRPDDMEWRNKYICVEEPFDGTN.

The protein belongs to the DNA polymerase type-B-like family. GLD2 subfamily. In terms of assembly, interacts with CPEB1, CPEB2, CPSF1 and PABPC1. Interacts with QKI isoform QKI7; promoting recruitment to miRNA miR-122 and miR-122 stabilization. Requires Mg(2+) as cofactor. The cofactor is Mn(2+). As to expression, ubiquitous. In brain, it is highly expressed in the cerebral cortex, cerebellum, hippocampus and olfactory bulb.

It is found in the cytoplasm. The protein localises to the nucleus. The enzyme catalyses RNA(n) + ATP = RNA(n)-3'-adenine ribonucleotide + diphosphate. Cytoplasmic poly(A) RNA polymerase that adds successive AMP monomers to the 3'-end of specific RNAs, forming a poly(A) tail. In contrast to the canonical nuclear poly(A) RNA polymerase, it only adds poly(A) to selected cytoplasmic mRNAs. Does not play a role in replication-dependent histone mRNA degradation. Adds a single nucleotide to the 3' end of specific miRNAs, monoadenylation stabilizes and prolongs the activity of some but not all miRNAs. The protein is Poly(A) RNA polymerase GLD2 (Tent2) of Mus musculus (Mouse).